The primary structure comprises 221 residues: SIN3-HDAC complex-associated factor (221 aa).

2 disordered regions span residues 110 to 153 (KLQK…ASSS) and 201 to 221 (AAAE…TQEW). The span at 111-121 (LQKEFKRHNSD) shows a compositional bias: basic and acidic residues. The span at 124-135 (STTSSASPAQSP) shows a compositional bias: low complexity. Over residues 136 to 153 (CYSNQSDEGSDTEMASSS) the composition is skewed to polar residues.

It belongs to the SINHCAF family. Component of the Sin3/HDAC corepressor complex at least composed of BRMS1, BRMS1L, ING2, SAP30, SAP30L, HDAC1. Found in a complex composed of at least SINHCAF, SIN3A, HDAC1, SAP30, RBBP4, OGT and TET1. Interacts with SIN3A and OGT. Embryonic stem cells (at protein level).

It is found in the nucleus. Subunit of the Sin3 deacetylase complex (Sin3/HDAC), this subunit is important for the repression of genes encoding components of the TGF-beta signaling pathway. Core component of a SIN3A complex (composed of at least SINHCAF, SIN3A, HDAC1, SAP30, RBBP4, OGT and TET1) present in embryonic stem (ES) cells. Promotes the stability of SIN3A and its presence on chromatin and is essential for maintaining the potential of ES cells to proliferate rapidly, while ensuring a short G1-phase of the cell cycle, thereby preventing premature lineage priming. The chain is SIN3-HDAC complex-associated factor (Sinhcaf) from Mus musculus (Mouse).